Here is a 666-residue protein sequence, read N- to C-terminus: Polyamine deacetylase HDAC10 (666 aa).

Residues 1–323 (MGTALVYHED…VCMMVQTLLG (323 aa)) form a histone deacetylase region. Residue histidine 135 is part of the active site.

It belongs to the histone deacetylase family. HD type 2 subfamily. As to quaternary structure, interacts with HDAC3. Interacts with HDAC2 and NCOR2/SMRT. Interacts with HSPA8/HSC70. Interacts with MSH2. Widely expressed.

Its subcellular location is the cytoplasm. The protein localises to the nucleus. The enzyme catalyses N(8)-acetylspermidine + H2O = spermidine + acetate. The catalysed reaction is N-acetylputrescine + H2O = putrescine + acetate. It catalyses the reaction N-acetylcadaverine + H2O = cadaverine + acetate. It carries out the reaction N(6)-acetyl-L-lysyl-[protein] + H2O = L-lysyl-[protein] + acetate. Functionally, polyamine deacetylase (PDAC), which acts preferentially on N(8)-acetylspermidine, and also on acetylcadaverine and acetylputrescine. Exhibits attenuated catalytic activity toward N(1),N(8)-diacetylspermidine and very low activity, if any, toward N(1)-acetylspermidine. Histone deacetylase activity has been observed in vitro. Has also been shown to be involved in MSH2 deacetylation. The physiological relevance of protein/histone deacetylase activity is unclear and could be very weak. May play a role in the promotion of late stages of autophagy, possibly autophagosome-lysosome fusion and/or lysosomal exocytosis in neuroblastoma cells. May play a role in homologous recombination. May promote DNA mismatch repair. The sequence is that of Polyamine deacetylase HDAC10 (Hdac10) from Mus musculus (Mouse).